The sequence spans 438 residues: Adenylyltransferase and sulfurtransferase UBA4 (438 aa).

ATP contacts are provided by residues Gly81, Asp102, 109-113 (SNLHR), Lys126, and 170-171 (DH). Positions 212 and 215 each coordinate Zn(2+). Cys229 (glycyl thioester intermediate; for adenylyltransferase activity) is an active-site residue. Residues Cys290 and Cys293 each coordinate Zn(2+). The Rhodanese domain maps to 340 to 436 (NKKKHILIDV…WSDDVDSKIP (97 aa)). Residue Cys396 is the Cysteine persulfide intermediate; for sulfurtransferase activity of the active site.

It in the N-terminal section; belongs to the HesA/MoeB/ThiF family. UBA4 subfamily. Zn(2+) is required as a cofactor.

It is found in the cytoplasm. The protein resides in the cytosol. It functions in the pathway tRNA modification; 5-methoxycarbonylmethyl-2-thiouridine-tRNA biosynthesis. In terms of biological role, plays a central role in 2-thiolation of mcm(5)S(2)U at tRNA wobble positions of cytosolic tRNA(Lys), tRNA(Glu) and tRNA(Gln). Acts by mediating the C-terminal thiocarboxylation of sulfur carrier URM1. Its N-terminus first activates URM1 as acyl-adenylate (-COAMP), then the persulfide sulfur on the catalytic cysteine is transferred to URM1 to form thiocarboxylation (-COSH) of its C-terminus. The reaction probably involves hydrogen sulfide that is generated from the persulfide intermediate and that acts as a nucleophile towards URM1. Subsequently, a transient disulfide bond is formed. Does not use thiosulfate as sulfur donor; NFS1 probably acting as a sulfur donor for thiocarboxylation reactions. Prior mcm(5) tRNA modification by the elongator complex is required for 2-thiolation. May also be involved in protein urmylation. The protein is Adenylyltransferase and sulfurtransferase UBA4 of Candida albicans (strain SC5314 / ATCC MYA-2876) (Yeast).